The following is a 438-amino-acid chain: MLNYDIAVIGGGIAGYCAALNAIEAGKKTVLISQGQSALHFSSGSIDVMAKTPSGERVEAPFSAMASLPQQHPEHPYSKMSPNFVRQSLYWLVDQLKEQGLPLHCQQDESNHHRITPLGTLKATWLSQPFVYQHRQNVAFKRLLFVAVDGYRDFQPLLAKDNLKKHPDFQHCEIGEIQVTIPGCEALRRNPNELRSIDIARLLKQPQAFNSLCHQLMKHATQEDLVIMPAIMGNGDGLVLLQQLRRQTNLTLHEVPTMPPSLLGIRIEEALQKRFLKQGGVLLKGDQVLSGEWDAQGHLVSISTRNLGDIPLHANAYILASGSYFSQGLKASLDKIVEPIFGLDMVAKPHRRQWRNDQFFSASAHPFMAFGVETDAMFRPSLNGQVCQNLYCCGSVLSGYDPVFEGSGGGVAVSTALAAVQRAMGLKQAMSVEEECVL.

Belongs to the anaerobic G-3-P dehydrogenase subunit B family. In terms of assembly, composed of a catalytic GlpA/B dimer and of membrane bound GlpC. FMN is required as a cofactor.

It carries out the reaction a quinone + sn-glycerol 3-phosphate = dihydroxyacetone phosphate + a quinol. The protein operates within polyol metabolism; glycerol degradation via glycerol kinase pathway; glycerone phosphate from sn-glycerol 3-phosphate (anaerobic route): step 1/1. Functionally, conversion of glycerol 3-phosphate to dihydroxyacetone. Uses fumarate or nitrate as electron acceptor. The chain is Anaerobic glycerol-3-phosphate dehydrogenase subunit B from Vibrio vulnificus (strain YJ016).